We begin with the raw amino-acid sequence, 20 residues long: Trypsin inhibitor A chain (20 aa).

It belongs to the protease inhibitor I3 (leguminous Kunitz-type inhibitor) family. As to quaternary structure, heterodimer of an 'A' and a 'B' chain linked by a disulfide bond.

Functionally, inhibits trypsin and alpha-chymotrypsin. The sequence is that of Trypsin inhibitor A chain from Albizia julibrissin (Silk tree).